A 562-amino-acid polypeptide reads, in one-letter code: Alpha-1D adrenergic receptor (562 aa).

Over 1 to 90 (MTFRDILSVT…VGGLVVSAQG (90 aa)) the chain is Extracellular. Disordered regions lie at residues 13-44 (GPRASSSTGGSGAGGGAGTVGPEGPAVGGVPG) and 50-69 (AVVGTGSGEDNQSSTAEAGA). The segment covering 21–44 (GGSGAGGGAGTVGPEGPAVGGVPG) has biased composition (gly residues). Residues Asn-60 and Asn-76 are each glycosylated (N-linked (GlcNAc...) asparagine). The helical transmembrane segment at 91–115 (VGVGVFLAAFILTAVAGNLLVILSV) threads the bilayer. Residues 116–127 (ACNRHLQTVTNY) are Cytoplasmic-facing. A helical membrane pass occupies residues 128-153 (FIVNLAVADLLLSAAVLPFSATMEVL). Residues 154–163 (GFWPFGRTFC) are Extracellular-facing. The helical transmembrane segment at 164–186 (DVWAAVDVLCCTASILSLCTISV) threads the bilayer. At 187-207 (DRYVGVRHSLKYPAIMTERKA) the chain is on the cytoplasmic side. The helical transmembrane segment at 208 to 232 (AAILALLWAVALVVSVGPLLGWKEP) threads the bilayer. Residues 233–245 (VPPDERFCGITEE) are Extracellular-facing. The helical transmembrane segment at 246-269 (VGYAIFSSVCSFYLPMAVIVVMYC) threads the bilayer. Residues 270-342 (RVYVVARSTT…KFSREKKAAK (73 aa)) lie on the Cytoplasmic side of the membrane. A helical transmembrane segment spans residues 343 to 367 (TLAIVVGVFVLCWFPFFFVLPLGSL). The Extracellular segment spans residues 368–374 (FPQLKPS). Residues 375–399 (EGVFKVIFWLGYFNSCVNPLIYPCS) traverse the membrane as a helical segment. Residues 400 to 562 (SREFKRAFLR…DLSNLRETDI (163 aa)) are Cytoplasmic-facing. Residue Cys-413 is the site of S-palmitoyl cysteine attachment. Positions 444–472 (QPAHRTPRGSPSPHCTPRPGLRRHAGGAG) are disordered.

It belongs to the G-protein coupled receptor 1 family. Adrenergic receptor subfamily. ADRA1D sub-subfamily. In terms of assembly, interacts with FLNA (via filamin repeat 21); increases PKA-mediated phosphorylation of FLNA. Palmitoylated. Palmitoylation by ZDHHC21 may increase the expression of the receptor and regulate downstream signaling.

The protein resides in the cell membrane. Functionally, this alpha-adrenergic receptor mediates its effect through the influx of extracellular calcium. This Mus musculus (Mouse) protein is Alpha-1D adrenergic receptor (Adra1d).